The primary structure comprises 187 residues: Putative acyl-coenzyme A oxidase At3g06690 (187 aa).

The tract at residues 1–21 (MTKEPIYSPRMLHRDPDSPRP) is disordered.

The protein belongs to the acyl-CoA oxidase family.

It catalyses the reaction a 2,3-saturated acyl-CoA + O2 = a (2E)-enoyl-CoA + H2O2. This chain is Putative acyl-coenzyme A oxidase At3g06690, found in Arabidopsis thaliana (Mouse-ear cress).